Here is a 198-residue protein sequence, read N- to C-terminus: Recombination protein RecR (198 aa).

A C4-type zinc finger spans residues 57–72; the sequence is CSECGHITEQDPCYIC. Positions 80-175 constitute a Toprim domain; that stretch reads SVICVVEDDK…TVTRLAQGLS (96 aa).

It belongs to the RecR family.

May play a role in DNA repair. It seems to be involved in an RecBC-independent recombinational process of DNA repair. It may act with RecF and RecO. This Staphylococcus saprophyticus subsp. saprophyticus (strain ATCC 15305 / DSM 20229 / NCIMB 8711 / NCTC 7292 / S-41) protein is Recombination protein RecR.